Here is a 100-residue protein sequence, read N- to C-terminus: Urease subunit gamma (100 aa).

It belongs to the urease gamma subunit family. Heterotrimer of UreA (gamma), UreB (beta) and UreC (alpha) subunits. Three heterotrimers associate to form the active enzyme.

It localises to the cytoplasm. The enzyme catalyses urea + 2 H2O + H(+) = hydrogencarbonate + 2 NH4(+). It participates in nitrogen metabolism; urea degradation; CO(2) and NH(3) from urea (urease route): step 1/1. The polypeptide is Urease subunit gamma (Saccharopolyspora erythraea (strain ATCC 11635 / DSM 40517 / JCM 4748 / NBRC 13426 / NCIMB 8594 / NRRL 2338)).